The sequence spans 220 residues: Polyadenylate-binding protein 2 (220 aa).

The disordered stretch occupies residues 1–24 (MEEEEHEVYGGEIPDVGEMDGDME). Residues 34-74 (AADDDAVKELDEMKKRLKEMEDEAAALREMQAKVEKEMGAQ) are a coiled coil. The segment at 78-219 (SIAANQAGKE…FRRPMRYMPY (142 aa)) is necessary for homooligomerization. Residues 92-168 (RSVFVGNVDY…RQLKVLQKRT (77 aa)) enclose the RRM domain. The Nuclear localization signal signature appears at 165-172 (QKRTNVPG).

In terms of assembly, monomer and homooligomer. Binds RNA as a monomer and oligomerizes when bound to poly(A). Forms a complex with cleavage and polyadenylation specificity factor (CPSF) subunits PAPS2, FIPS5, PABN3 and PABN1. Interacts with CSP3.

The protein resides in the nucleus speckle. It localises to the cytoplasm. Involved in the 3'-end formation of mRNA precursors (pre-mRNA) by the addition of a poly(A) tail of 200-250 nt to the upstream cleavage product. Stimulates poly(A) polymerase (PAPOLA) conferring processivity on the poly(A) tail elongation reaction and also controls the poly(A) tail length. Increases the affinity of poly(A) polymerase for RNA. Binds to poly(A) and to poly(G) with high affinity. May protect the poly(A) tail from degradation. The sequence is that of Polyadenylate-binding protein 2 from Arabidopsis thaliana (Mouse-ear cress).